The primary structure comprises 188 residues: Mitochondrial import receptor subunit TOM20-1 (188 aa).

Over 1–164 the chain is Cytoplasmic; it reads MDKLNFFEEI…VVKNKKSSDE (164 aa). A helical membrane pass occupies residues 165 to 182; sequence KYIVMGWVILAIGVVACI. At 183 to 188 the chain is on the mitochondrial intermembrane side; it reads SFRKLR.

This sequence belongs to the Tom20 family. As to quaternary structure, forms part of the preprotein translocase complex of the outer mitochondrial membrane (TOM complex) which consists of at least 6 different proteins (TOM5, TOM6, TOM7, TOM20, TOM22/TOM9 and TOM40). Component of a mitochondrial large protein complex that contains, at least, MIC60, DGS1, TOM40, TOM20 proteins, and petC/RISP. Barely detected in roots.

Its subcellular location is the mitochondrion outer membrane. In terms of biological role, central component of the receptor complex responsible for the recognition and translocation of cytosolically synthesized mitochondrial preproteins. Together with TOM22 functions as the transit peptide receptor at the surface of the mitochondrion outer membrane and facilitates the movement of preproteins into the translocation pore. This Arabidopsis thaliana (Mouse-ear cress) protein is Mitochondrial import receptor subunit TOM20-1.